The following is a 148-amino-acid chain: Deoxyuridine 5'-triphosphate nucleotidohydrolase (148 aa).

Substrate-binding positions include 67–69 (RSG), Asn80, 84–86 (LID), and Met94.

This sequence belongs to the dUTPase family. It depends on Mg(2+) as a cofactor.

The enzyme catalyses dUTP + H2O = dUMP + diphosphate + H(+). It functions in the pathway pyrimidine metabolism; dUMP biosynthesis; dUMP from dCTP (dUTP route): step 2/2. Functionally, this enzyme is involved in nucleotide metabolism: it produces dUMP, the immediate precursor of thymidine nucleotides and it decreases the intracellular concentration of dUTP so that uracil cannot be incorporated into DNA. This chain is Deoxyuridine 5'-triphosphate nucleotidohydrolase, found in Burkholderia ambifaria (strain ATCC BAA-244 / DSM 16087 / CCUG 44356 / LMG 19182 / AMMD) (Burkholderia cepacia (strain AMMD)).